Consider the following 185-residue polypeptide: Photosystem I assembly protein Ycf4 (185 aa).

A run of 2 helical transmembrane segments spans residues 24-44 (YLIG…SISS) and 66-86 (IIMG…WYLV).

This sequence belongs to the Ycf4 family.

The protein localises to the cellular thylakoid membrane. Functionally, seems to be required for the assembly of the photosystem I complex. This is Photosystem I assembly protein Ycf4 from Prochlorococcus marinus (strain MIT 9515).